Here is an 896-residue protein sequence, read N- to C-terminus: MSVKASGGSSLARPQLYQTVPVSAISQAEQQDRFLEGSELNELTAYFQSGALRLEIAETLTQNADLIVSRAANRIFTGGSPLSYLEKPVERQPALVGASSDSRNGSVTYAESNGSGGLFGGLRSVFSSTGPIPPGFRPINIARYGPSNMQKSLRDMSWFLRYTTYAIVAGDPNIIVVNTRGLKEVIENACSIDATIVAIQEMRAASADYFRNNAQAKEIVLQYFDILLSEFKAPTPANKVRQGPSNDIQGLELPQSYFNAAAKRQKYAMKPGLSALEKNAVIKAAYRQIFERDITKAYSQSISYLESQVRNGDISMKEFVRRLAKSPLYRKQFFEPFINSRALELAFRHILGRGPSSREEVQKYFSIVSSGGLPALVDALVDSQEYADYFGEETVPYLRGLGVEAQECRNWGMQQDLFSYSAPFRKVPQFITTFAQYDRPLPDQHVYGSGNDPLEIQFGAIFPKETRNPSKRPAPFNKDTKRILIHRGPAVNNQVGNPSAVGEFPGSLGAKVFRLNGGLPGAKVGKNTGTSVKFGESSTQALIRAAYRQVFGRDLYEGQRLSVAEIQLENGDISVREFIKRLAKSELFLKLYWAPHYVCKAIEYMHRRLLGRPTYGRQEMNQYFDIASKQGFYAVVEAMIDSKEYSDAFGEDTVPYERYLTPGGLQMRSARVGSLREDIGQRVDKEVTPRFVELGQVSAIRTEPEIAYRSNQGVTRQRQQTKVFKLVSTYDKVAVKNAIRAAYRQVFERDLEPYIINSEFTALESKLSNNEINVKEFIEGLGTSELYMKEFYAPYPNTKVIEMGTKHFLGRAPLNQKEIQQYNQILASQGLKAFIGAMVNGMEYLQTFGEDTVPYRRFPTLPAANFPNTERLYNKLTKQDKELVVPSFTPVVKVGG.

Cys190 provides a ligand contact to (2R,3E)-phycocyanobilin. PBS-linker domains follow at residues 247-427, 508-684, and 703-881; these read DIQG…FRKV, LGAK…QRVD, and EPEI…KQDK.

This sequence belongs to the phycobilisome linker protein family. Heterodimer of ApcF (a variant beta-allophycocyanin). Phycobilisomes of this organism are composed of a two cylinder core, from which six rods radiate. The core is mainly composed of allophycocyanin alpha and beta chains and of minor components. Post-translationally, contains one covalently linked bilin chromophore. This protein autochromophorylates.

It localises to the cellular thylakoid membrane. Its function is as follows. This protein is postulated to act both as terminal energy acceptor (by its phycobilin-like domains) and as a linker polypeptide (by its repeats and arms) that stabilizes the phycobilisome core architecture. Has intrinsic bilin lyase activity. The protein is Phycobiliprotein ApcE (apcE) of Synechocystis sp. (strain ATCC 27184 / PCC 6803 / Kazusa).